The sequence spans 256 residues: Probable serine/threonine-protein kinase YbdM (256 aa).

A Protein kinase domain is found at 25–256 (YKIEECLGMG…DLNRAIQSVT (232 aa)). ATP-binding positions include 31–39 (LGMGGYGLV) and Lys-54. Asp-149 acts as the Proton acceptor in catalysis.

It belongs to the protein kinase superfamily. Ser/Thr protein kinase family.

The catalysed reaction is L-seryl-[protein] + ATP = O-phospho-L-seryl-[protein] + ADP + H(+). It carries out the reaction L-threonyl-[protein] + ATP = O-phospho-L-threonyl-[protein] + ADP + H(+). The polypeptide is Probable serine/threonine-protein kinase YbdM (ybdM) (Bacillus subtilis (strain 168)).